Reading from the N-terminus, the 547-residue chain is Inactive delta-guaiene synthase (547 aa).

Mg(2+) contacts are provided by Asp299, Asp303, and Asp444. The DDXXD motif motif lies at Asp299–Asp303.

Belongs to the terpene synthase family. Requires Mg(2+) as cofactor.

The chain is Inactive delta-guaiene synthase (C1) from Aquilaria crassna (Eagle wood).